Reading from the N-terminus, the 1396-residue chain is Probable ATP-dependent RNA helicase spindle-E (1396 aa).

The disordered stretch occupies residues 1–34 (MDEAAGPSTSRTSNLEDVDDEGASLAEEDEEHTK). Residues 16-30 (EDVDDEGASLAEEDE) are compositionally biased toward acidic residues. One can recognise a Helicase ATP-binding domain in the interval 68-234 (LDKIRSNAVV…FKIPKKSGYL (167 aa)). 81–88 (GATGCGKT) is a binding site for ATP. A DEAH box motif is present at residues 180–183 (DEVH). Residues 292–468 (KGQEFGDSLE…TVVLKAKLLE (177 aa)) form the Helicase C-terminal domain. The 66-residue stretch at 885–950 (NFAMGQMVAA…RQLDDSLGQL (66 aa)) folds into the Tudor domain.

This sequence belongs to the DEAD box helicase family. DEAH subfamily.

The protein resides in the cytoplasm. The catalysed reaction is ATP + H2O = ADP + phosphate + H(+). Functionally, probable ATP-binding RNA helicase which plays a central role during gametogenesis by repressing transposable elements and preventing their mobilization, which is essential for the germline integrity. Acts via the piRNA metabolic process, which mediates the repression of transposable elements during meiosis by forming complexes composed of piRNAs and Piwi proteins and govern the methylation and subsequent repression of transposons. This is Probable ATP-dependent RNA helicase spindle-E (spn-E) from Culex quinquefasciatus (Southern house mosquito).